We begin with the raw amino-acid sequence, 131 residues long: Large ribosomal subunit protein bL17 (131 aa).

The protein belongs to the bacterial ribosomal protein bL17 family. As to quaternary structure, part of the 50S ribosomal subunit. Contacts protein L32.

The sequence is that of Large ribosomal subunit protein bL17 from Nitrosospira multiformis (strain ATCC 25196 / NCIMB 11849 / C 71).